A 632-amino-acid polypeptide reads, in one-letter code: Epsin-3 (632 aa).

The a 1,2-diacyl-sn-glycero-3-phospho-(1D-myo-inositol-4,5-bisphosphate) site is built by R8, K11, R25, N30, R63, and H73. The ENTH domain occupies 12–144; sequence NIVHNYSEAE…KDEERLRQER (133 aa). The tract at residues 172-214 is disordered; sequence YGEDYSRSRGSPSSYNSSSSSPRYTSDLEQARPQTSGEEELQL. A compositionally biased stretch (low complexity) spans 179–196; that stretch reads SRGSPSSYNSSSSSPRYT. S191 and S192 each carry phosphoserine. UIM domains lie at 209-228 and 236-255; these read EEEL…AEKP and DEDL…HEKE. The segment at 257 to 296 is disordered; it reads RSWQGDGSPMANGAGAVVHHQRDREPEREERKEEEKLKTS. At S264 the chain carries Phosphoserine. A compositionally biased stretch (basic and acidic residues) spans 276 to 294; that stretch reads HQRDREPEREERKEEEKLK. 8 repeat units span residues 321-323, 344-346, 371-373, 387-389, 404-406, 524-526, 537-539, and 629-631. The interval 321–406 is 5 X 3 AA repeats of [DE]-P-W; that stretch reads DPWDIPGFRP…KLPSTGADPW (86 aa). Disordered regions lie at residues 326 to 501, 525 to 560, and 604 to 632; these read PGFR…SFLG, PFLT…PALG, and AFAP…NPFL. Polar residues predominate over residues 353-371; the sequence is TVLSRSQPWDLTPMLSSSE. The tract at residues 524-631 is 3 X 3 AA repeats of N-P-F; that stretch reads NPFLTGLSAP…PPPQTGTNPF (108 aa).

The protein belongs to the epsin family. In terms of tissue distribution, detected in migrating keratinocytes from wounded skin, but not in differentiating keratinocytes or in normal skin. Detected in chronic wounds, basal cell carcinoma and ulcerative colitis.

The protein resides in the cytoplasm. Its subcellular location is the perinuclear region. It is found in the cytoplasmic vesicle. The protein localises to the clathrin-coated vesicle. It localises to the nucleus. In Homo sapiens (Human), this protein is Epsin-3 (EPN3).